Consider the following 220-residue polypeptide: Metalloproteinase inhibitor 2 (220 aa).

The first 26 residues, M1–A26, serve as a signal peptide directing secretion. C27 serves as a coordination point for Zn(2+). Involved in metalloproteinase-binding regions lie at residues C27–S30 and S95–A96. Cystine bridges form between C27–C98, C29–C127, C39–C152, C154–C201, C159–C164, and C172–C193. One can recognise an NTR domain in the interval C27–C152.

It belongs to the protease inhibitor I35 (TIMP) family. In terms of assembly, interacts (via the C-terminal) with MMP2 (via the C-terminal PEX domain); the interaction inhibits the MMP2 activity. The activity of TIMP2 is dependent on the presence of disulfide bonds.

It localises to the secreted. Its function is as follows. Complexes with metalloproteinases (such as collagenases) and irreversibly inactivates them by binding to their catalytic zinc cofactor. Known to act on MMP-1, MMP-2, MMP-3, MMP-7, MMP-8, MMP-9, MMP-10, MMP-13, MMP-14, MMP-15, MMP-16 and MMP-19. This chain is Metalloproteinase inhibitor 2 (TIMP2), found in Homo sapiens (Human).